Consider the following 123-residue polypeptide: SOSS complex subunit C homolog (123 aa).

This sequence belongs to the SOSS-C family.

In Drosophila ananassae (Fruit fly), this protein is SOSS complex subunit C homolog.